Reading from the N-terminus, the 251-residue chain is MKKAGLLFLVMIVIAVVAAGIGYWKLTGEESDTLRKIVLEECLPNQQQNQNPSPCAEVKPNAGYVVLKDLNGPLQYLLMPTYRINGTESPLLTDPSTPNFFWLAWQARDFMSKKYGQPVPDRAVSLAINSRTGRTQNHFHIHISCIRPDVREQLDNNLANISSRWLPLPGGLRGHEYLARRVTESELVQRSPFMMLAEEVPEAREHMGSYGLAMVRQSDNSFVLLATQRNLLTLNRASAEEIQDHECEILR.

Residues 4–24 form a helical membrane-spanning segment; that stretch reads AGLLFLVMIVIAVVAAGIGYW.

The protein belongs to the Cdh family.

The protein localises to the cell inner membrane. It catalyses the reaction a CDP-1,2-diacyl-sn-glycerol + H2O = a 1,2-diacyl-sn-glycero-3-phosphate + CMP + 2 H(+). The protein operates within phospholipid metabolism; CDP-diacylglycerol degradation; phosphatidate from CDP-diacylglycerol: step 1/1. The protein is CDP-diacylglycerol pyrophosphatase of Escherichia coli (strain SE11).